Here is a 424-residue protein sequence, read N- to C-terminus: Serine--tRNA ligase (424 aa).

230–232 contributes to the L-serine binding site; it reads TAE. 261-263 contacts ATP; that stretch reads RSE. Glu284 contributes to the L-serine binding site. 348 to 351 is a binding site for ATP; the sequence is EISS. L-serine is bound at residue Ser384.

Belongs to the class-II aminoacyl-tRNA synthetase family. Type-1 seryl-tRNA synthetase subfamily. In terms of assembly, homodimer. The tRNA molecule binds across the dimer.

It is found in the cytoplasm. The catalysed reaction is tRNA(Ser) + L-serine + ATP = L-seryl-tRNA(Ser) + AMP + diphosphate + H(+). It carries out the reaction tRNA(Sec) + L-serine + ATP = L-seryl-tRNA(Sec) + AMP + diphosphate + H(+). The protein operates within aminoacyl-tRNA biosynthesis; selenocysteinyl-tRNA(Sec) biosynthesis; L-seryl-tRNA(Sec) from L-serine and tRNA(Sec): step 1/1. In terms of biological role, catalyzes the attachment of serine to tRNA(Ser). Is also able to aminoacylate tRNA(Sec) with serine, to form the misacylated tRNA L-seryl-tRNA(Sec), which will be further converted into selenocysteinyl-tRNA(Sec). This chain is Serine--tRNA ligase, found in Streptococcus pneumoniae (strain ATCC 700669 / Spain 23F-1).